We begin with the raw amino-acid sequence, 255 residues long: Phosphate import ATP-binding protein PstB (255 aa).

In terms of domain architecture, ABC transporter spans 9–250 (MYAQGLQFYY…PRNKQTEDYI (242 aa)). 41 to 48 (GPSGCGKS) contacts ATP.

It belongs to the ABC transporter superfamily. Phosphate importer (TC 3.A.1.7) family. In terms of assembly, the complex is composed of two ATP-binding proteins (PstB), two transmembrane proteins (PstC and PstA) and a solute-binding protein (PstS).

Its subcellular location is the cell inner membrane. It catalyses the reaction phosphate(out) + ATP + H2O = ADP + 2 phosphate(in) + H(+). In terms of biological role, part of the ABC transporter complex PstSACB involved in phosphate import. Responsible for energy coupling to the transport system. The polypeptide is Phosphate import ATP-binding protein PstB (Nitratidesulfovibrio vulgaris (strain ATCC 29579 / DSM 644 / CCUG 34227 / NCIMB 8303 / VKM B-1760 / Hildenborough) (Desulfovibrio vulgaris)).